The primary structure comprises 1563 residues: Pentafunctional AROM polypeptide (1563 aa).

The tract at residues 1 to 382 (MAESSSNPTR…YEPKASVVED (382 aa)) is 3-dehydroquinate synthase. Residues 48 to 50 (DTN), 82 to 85 (EYSK), 113 to 115 (GGV), and aspartate 118 each bind NAD(+). Arginine 129 contributes to the 7-phospho-2-dehydro-3-deoxy-D-arabino-heptonate binding site. 138 to 139 (TT) is an NAD(+) binding site. Positions 145 and 151 each coordinate 7-phospho-2-dehydro-3-deoxy-D-arabino-heptonate. Lysine 160 serves as a coordination point for NAD(+). Asparagine 161 is a binding site for 7-phospho-2-dehydro-3-deoxy-D-arabino-heptonate. NAD(+)-binding positions include 178 to 181 (FLNT) and asparagine 189. Glutamate 193 serves as a coordination point for Zn(2+). Residues 193–196 (EVIK) and lysine 248 contribute to the 7-phospho-2-dehydro-3-deoxy-D-arabino-heptonate site. The Proton acceptor; for 3-dehydroquinate synthase activity role is filled by glutamate 258. Residues 262–266 (RNLLN) and histidine 269 each bind 7-phospho-2-dehydro-3-deoxy-D-arabino-heptonate. Histidine 269 contacts Zn(2+). Residue histidine 273 is the Proton acceptor; for 3-dehydroquinate synthase activity of the active site. Positions 285 and 354 each coordinate 7-phospho-2-dehydro-3-deoxy-D-arabino-heptonate. Position 285 (histidine 285) interacts with Zn(2+). The EPSP synthase stretch occupies residues 395–834 (VHAGVPKDLK…WDTMSNYFKS (440 aa)). Cysteine 816 acts as the For EPSP synthase activity in catalysis. Over residues 836–850 (LEGEEEPHSSHVSHE) the composition is skewed to basic and acidic residues. Residues 836–857 (LEGEEEPHSSHVSHEKPRKGNP) form a disordered region. Positions 857–1051 (PKSIFIIGMR…KKKPQSSFVS (195 aa)) are shikimate kinase. 864–871 (GMRGAGKS) contacts ATP. The 3-dehydroquinase stretch occupies residues 1052-1265 (LTVPNVSKAL…AAPGQLSAAE (214 aa)). Histidine 1168 serves as the catalytic Proton acceptor; for 3-dehydroquinate dehydratase activity. Lysine 1196 (schiff-base intermediate with substrate; for 3-dehydroquinate dehydratase activity) is an active-site residue. The interval 1278–1563 (PRSFYLFGKP…TDAQAAVMGN (286 aa)) is shikimate dehydrogenase.

It in the N-terminal section; belongs to the sugar phosphate cyclases superfamily. Dehydroquinate synthase family. In the 2nd section; belongs to the EPSP synthase family. The protein in the 3rd section; belongs to the shikimate kinase family. This sequence in the 4th section; belongs to the type-I 3-dehydroquinase family. It in the C-terminal section; belongs to the shikimate dehydrogenase family. As to quaternary structure, homodimer. Requires Zn(2+) as cofactor.

The protein localises to the cytoplasm. The enzyme catalyses 7-phospho-2-dehydro-3-deoxy-D-arabino-heptonate = 3-dehydroquinate + phosphate. It catalyses the reaction 3-dehydroquinate = 3-dehydroshikimate + H2O. The catalysed reaction is shikimate + NADP(+) = 3-dehydroshikimate + NADPH + H(+). It carries out the reaction shikimate + ATP = 3-phosphoshikimate + ADP + H(+). The enzyme catalyses 3-phosphoshikimate + phosphoenolpyruvate = 5-O-(1-carboxyvinyl)-3-phosphoshikimate + phosphate. Its pathway is metabolic intermediate biosynthesis; chorismate biosynthesis; chorismate from D-erythrose 4-phosphate and phosphoenolpyruvate: step 2/7. It participates in metabolic intermediate biosynthesis; chorismate biosynthesis; chorismate from D-erythrose 4-phosphate and phosphoenolpyruvate: step 3/7. The protein operates within metabolic intermediate biosynthesis; chorismate biosynthesis; chorismate from D-erythrose 4-phosphate and phosphoenolpyruvate: step 4/7. It functions in the pathway metabolic intermediate biosynthesis; chorismate biosynthesis; chorismate from D-erythrose 4-phosphate and phosphoenolpyruvate: step 5/7. Its pathway is metabolic intermediate biosynthesis; chorismate biosynthesis; chorismate from D-erythrose 4-phosphate and phosphoenolpyruvate: step 6/7. Functionally, the AROM polypeptide catalyzes 5 consecutive enzymatic reactions in prechorismate polyaromatic amino acid biosynthesis. This Sordaria macrospora (strain ATCC MYA-333 / DSM 997 / K(L3346) / K-hell) protein is Pentafunctional AROM polypeptide.